Consider the following 97-residue polypeptide: DNA replication protein 1 (97 aa).

Positions 49–78 (IELEKKMTKLEHENKLMKNALYELSRMENN) form a coiled coil.

The protein belongs to the phi29likevirus DNA replication protein 1 family. In terms of assembly, homomultimer. Self-associates into large complexes forming long filamentous structures. Interacts (via N-terminus) with the primer terminal protein.

It is found in the host membrane. Its function is as follows. Protein that assembles into highly ordered structures and provides a specific site for viral DNA replication. Probably anchors the viral DNA replisome to the host membrane. The polypeptide is DNA replication protein 1 (1C) (Bacillus subtilis (Bacteriophage PZA)).